The following is a 317-amino-acid chain: NADH-quinone oxidoreductase subunit H 1 (317 aa).

Transmembrane regions (helical) follow at residues 7-27 (IWVNLILILAVLFAFAAMLSW), 74-94 (AVFVLAPAIVAVTTLLAFAVV), 107-127 (IGVLFFLAMSSLGVYSIVLGG), 147-167 (LSYEVFMGLALMGVVMLAGSF), 179-199 (LWFCIPQILGLATFAVAGIAE), 230-250 (FFIGEYVGITLISAMIVTLFF), 257-277 (VLPPLAWFLLKTFIVIICFVL), and 297-317 (VMLPVTLVNLLLTGAVVLSVA).

Belongs to the complex I subunit 1 family. NDH-1 is composed of 14 different subunits. Subunits NuoA, H, J, K, L, M, N constitute the membrane sector of the complex.

The protein localises to the cell inner membrane. The catalysed reaction is a quinone + NADH + 5 H(+)(in) = a quinol + NAD(+) + 4 H(+)(out). Its function is as follows. NDH-1 shuttles electrons from NADH, via FMN and iron-sulfur (Fe-S) centers, to quinones in the respiratory chain. The immediate electron acceptor for the enzyme in this species is believed to be ubiquinone. Couples the redox reaction to proton translocation (for every two electrons transferred, four hydrogen ions are translocated across the cytoplasmic membrane), and thus conserves the redox energy in a proton gradient. This subunit may bind ubiquinone. This Nitrosospira multiformis (strain ATCC 25196 / NCIMB 11849 / C 71) protein is NADH-quinone oxidoreductase subunit H 1.